A 230-amino-acid polypeptide reads, in one-letter code: Urease accessory protein UreF (230 aa).

The protein belongs to the UreF family. As to quaternary structure, ureD, UreF and UreG form a complex that acts as a GTP-hydrolysis-dependent molecular chaperone, activating the urease apoprotein by helping to assemble the nickel containing metallocenter of UreC. The UreE protein probably delivers the nickel.

The protein resides in the cytoplasm. Functionally, required for maturation of urease via the functional incorporation of the urease nickel metallocenter. The chain is Urease accessory protein UreF from Cupriavidus taiwanensis (strain DSM 17343 / BCRC 17206 / CCUG 44338 / CIP 107171 / LMG 19424 / R1) (Ralstonia taiwanensis (strain LMG 19424)).